The primary structure comprises 609 residues: MTIDNPSAFLKTLPTGSGVYQMQDAQGKVIYVGKARNLQKRVSSYFRRQLDSKTQAMMAQVQSIQTTITRNENEALLLEASFIKQFRPRYNVLLRDDKSYPYLYLATHQKFPRLDFYRGAKKAPGRYFGPYPNAGSVRENLALIQKLFKLRQCSESFFKNRTRPCLQYQIKRCTAPCVGYVNEQEYRRQVEDAILFFEGKNDQVIIKLTERMEVASENLVFEEAAHYRDQIRQLRRLQKQQIITGGKGNIDIIGIAESNGAIGFAILFIRSGRMIGHKPFFPNTPLGTTLQTALVEFIPQYYLSPLRNGDIPERIVTSEPLEDRLWIQRALSSGLNRKLAITDQKRAPYKQWQAMAALNAAQALSQHLAQKNTFALKLEAIQKSLALPNPIARIECFDISHTLGEATVASCVVFGEEGPIKKDYRRFNISGVTPGDDYGALRQALTRRYVRLKEGEGILPDVLLIDGGMGQLRQAAEVLEELQVSGVILTAIAKGPGRKAGLEKLFVWGRREEIHLPADNIAFHLIQQIRDEAHRFAITAHCNRRAKRRVESTLQEIEGIGPKRRQKLLKYFGGLQELQRASIEEIARVPGVSETLAKAIYDACHQHKG.

In terms of domain architecture, GIY-YIG spans 15 to 92 (TGSGVYQMQD…IKQFRPRYNV (78 aa)). Residues 202-237 (DQVIIKLTERMEVASENLVFEEAAHYRDQIRQLRRL) enclose the UVR domain.

The protein belongs to the UvrC family. As to quaternary structure, interacts with UvrB in an incision complex.

It is found in the cytoplasm. In terms of biological role, the UvrABC repair system catalyzes the recognition and processing of DNA lesions. UvrC both incises the 5' and 3' sides of the lesion. The N-terminal half is responsible for the 3' incision and the C-terminal half is responsible for the 5' incision. This is UvrABC system protein C from Coxiella burnetii (strain RSA 331 / Henzerling II).